We begin with the raw amino-acid sequence, 401 residues long: Formate-dependent phosphoribosylglycinamide formyltransferase (401 aa).

Residues 22–23 and glutamate 82 contribute to the N(1)-(5-phospho-beta-D-ribosyl)glycinamide site; that span reads EL. Residues arginine 115, lysine 157, 162-167, 197-200, and glutamate 205 contribute to the ATP site; these read SSGKGQ and EGFI. In terms of domain architecture, ATP-grasp spans 120 to 315; sequence RLAAESLGLP…EFELHARAIL (196 aa). The Mg(2+) site is built by glutamate 274 and glutamate 286. N(1)-(5-phospho-beta-D-ribosyl)glycinamide contacts are provided by residues aspartate 293, lysine 362, and 369-370; that span reads RR.

This sequence belongs to the PurK/PurT family. In terms of assembly, homodimer.

The catalysed reaction is N(1)-(5-phospho-beta-D-ribosyl)glycinamide + formate + ATP = N(2)-formyl-N(1)-(5-phospho-beta-D-ribosyl)glycinamide + ADP + phosphate + H(+). It participates in purine metabolism; IMP biosynthesis via de novo pathway; N(2)-formyl-N(1)-(5-phospho-D-ribosyl)glycinamide from N(1)-(5-phospho-D-ribosyl)glycinamide (formate route): step 1/1. Its function is as follows. Involved in the de novo purine biosynthesis. Catalyzes the transfer of formate to 5-phospho-ribosyl-glycinamide (GAR), producing 5-phospho-ribosyl-N-formylglycinamide (FGAR). Formate is provided by PurU via hydrolysis of 10-formyl-tetrahydrofolate. The chain is Formate-dependent phosphoribosylglycinamide formyltransferase from Cupriavidus taiwanensis (strain DSM 17343 / BCRC 17206 / CCUG 44338 / CIP 107171 / LMG 19424 / R1) (Ralstonia taiwanensis (strain LMG 19424)).